A 358-amino-acid polypeptide reads, in one-letter code: Methionine import ATP-binding protein MetN (358 aa).

An ABC transporter domain is found at 14–255 (VVFDAVSKRF…SRHETTRALL (242 aa)). Residue 52-59 (GRSGAGKS) participates in ATP binding.

It belongs to the ABC transporter superfamily. Methionine importer (TC 3.A.1.24) family. In terms of assembly, the complex is composed of two ATP-binding proteins (MetN), two transmembrane proteins (MetI) and a solute-binding protein (MetQ).

It localises to the cell inner membrane. It catalyses the reaction L-methionine(out) + ATP + H2O = L-methionine(in) + ADP + phosphate + H(+). The enzyme catalyses D-methionine(out) + ATP + H2O = D-methionine(in) + ADP + phosphate + H(+). Part of the ABC transporter complex MetNIQ involved in methionine import. Responsible for energy coupling to the transport system. The chain is Methionine import ATP-binding protein MetN from Rhizobium meliloti (strain 1021) (Ensifer meliloti).